A 564-amino-acid chain; its full sequence is Potassium-transporting ATPase potassium-binding subunit (564 aa).

10 helical membrane passes run 4 to 24, 67 to 87, 135 to 155, 179 to 199, 258 to 278, 286 to 306, 382 to 402, 420 to 440, 487 to 507, and 534 to 554; these read YDYL…PWLG, TLAL…VLLL, IGLT…LVAL, LYGL…QGVP, FEVA…GHYV, AIIA…LWSE, AGLY…GLMI, LLVA…AIAA, VMIG…VLAL, and LLLL…LALG.

It belongs to the KdpA family. As to quaternary structure, the system is composed of three essential subunits: KdpA, KdpB and KdpC.

Its subcellular location is the cell inner membrane. Functionally, part of the high-affinity ATP-driven potassium transport (or Kdp) system, which catalyzes the hydrolysis of ATP coupled with the electrogenic transport of potassium into the cytoplasm. This subunit binds the periplasmic potassium ions and delivers the ions to the membrane domain of KdpB through an intramembrane tunnel. The protein is Potassium-transporting ATPase potassium-binding subunit of Pseudomonas entomophila (strain L48).